The sequence spans 316 residues: MAEVKVKVQPPDADPVEIENRIIELCHQFPHGITDQVIQNEMPHIEAQQRAVAINRLLSMGQLDLLRSNTGLLYRIKDSQNAGKMKGSDNQEKLVYQIIEDAGNKGIWSRDIRYKSNLPLTEINKILKNLESKKLIKAVKSVAASKKKVYMLYNLQPDRSVTGGAWYSDQDFESEFVEVLNQQCFKFLQSKAETARESKQNPMIQRNSSFASSHEVWKYICELGISKVELSMEDIETILNTLIYDGKVEMTIIAAKEGTVGSVDGHMKLYRAVNPIIPPTGLVRAPCGLCPVFDDCHEGGEISPSNCIYMTEWLEF.

An N-acetylalanine modification is found at A2. Residues K5 and K7 each participate in a glycyl lysine isopeptide (Lys-Gly) (interchain with G-Cter in SUMO2) cross-link. C287, C290, C296, and C307 together coordinate [4Fe-4S] cluster.

It belongs to the eukaryotic RPC34/RPC39 RNA polymerase subunit family. In terms of assembly, component of the RNA polymerase III complex consisting of 17 subunits: a ten-subunit horseshoe-shaped catalytic core composed of POLR3A/RPC1, POLR3B/RPC2, POLR1C/RPAC1, POLR1D/RPAC2, POLR3K/RPC10, POLR2E/RPABC1, POLR2F/RPABC2, POLR2H/RPABC3, POLR2K/RPABC4 and POLR2L/RPABC5; a mobile stalk composed of two subunits POLR3H/RPC8 and CRCP/RPC9, protruding from the core and functioning primarily in transcription initiation; and additional subunits homologous to general transcription factors of the RNA polymerase II machinery, POLR3C/RPC3-POLR3F/RPC6-POLR3G/RPC7 heterotrimer required for transcription initiation and POLR3D/RPC4-POLR3E/RPC5 heterodimer involved in both transcription initiation and termination. Directly interacts with POLR3C. Interacts with TBP and TFIIIB90 and GTF3C4. Interacts with MAF1. As part of the RNA polymerase III complex, interacts with PKP2.

Its subcellular location is the nucleus. Functionally, DNA-dependent RNA polymerase catalyzes the transcription of DNA into RNA using the four ribonucleoside triphosphates as substrates. Specific peripheric component of RNA polymerase III (Pol III) which synthesizes small non-coding RNAs including 5S rRNA, snRNAs, tRNAs and miRNAs from at least 500 distinct genomic loci. Part of POLR3C/RPC3-POLR3F/RPC6-POLR3G/RPC7 heterotrimer that coordinates the dynamics of Pol III stalk and clamp modules during the transition from apo to elongation state. Pol III plays a key role in sensing and limiting infection by intracellular bacteria and DNA viruses, including varicella zoster virus. Acts as a nuclear and cytosolic DNA sensor detecting AT-rich DNA, involved in innate immune response. Can sense non-self dsDNA that serves as template for transcription into dsRNA. The non-self RNA polymerase III transcripts, such as Epstein-Barr virus-encoded RNAs (EBERs) induce type I interferon and NF-kappa-B through the RIG-I pathway. Preferentially binds double-stranded DNA (dsDNA). This Homo sapiens (Human) protein is DNA-directed RNA polymerase III subunit RPC6.